A 506-amino-acid chain; its full sequence is ATP synthase subunit alpha (506 aa).

172 to 179 (GDRKTGKT) contacts ATP.

It belongs to the ATPase alpha/beta chains family. In terms of assembly, F-type ATPases have 2 components, CF(1) - the catalytic core - and CF(0) - the membrane proton channel. CF(1) has five subunits: alpha(3), beta(3), gamma(1), delta(1), epsilon(1). CF(0) has three main subunits: a(1), b(2) and c(9-12). The alpha and beta chains form an alternating ring which encloses part of the gamma chain. CF(1) is attached to CF(0) by a central stalk formed by the gamma and epsilon chains, while a peripheral stalk is formed by the delta and b chains.

Its subcellular location is the cell membrane. The catalysed reaction is ATP + H2O + 4 H(+)(in) = ADP + phosphate + 5 H(+)(out). Its function is as follows. Produces ATP from ADP in the presence of a proton gradient across the membrane. The alpha chain is a regulatory subunit. The protein is ATP synthase subunit alpha of Lactobacillus gasseri (strain ATCC 33323 / DSM 20243 / BCRC 14619 / CIP 102991 / JCM 1131 / KCTC 3163 / NCIMB 11718 / NCTC 13722 / AM63).